The chain runs to 107 residues: Large ribosomal subunit protein uL24 (107 aa).

Belongs to the universal ribosomal protein uL24 family. As to quaternary structure, part of the 50S ribosomal subunit.

In terms of biological role, one of two assembly initiator proteins, it binds directly to the 5'-end of the 23S rRNA, where it nucleates assembly of the 50S subunit. Its function is as follows. One of the proteins that surrounds the polypeptide exit tunnel on the outside of the subunit. This chain is Large ribosomal subunit protein uL24, found in Thermotoga neapolitana (strain ATCC 49049 / DSM 4359 / NBRC 107923 / NS-E).